Consider the following 426-residue polypeptide: Glutamate-1-semialdehyde 2,1-aminomutase (426 aa).

Lys265 carries the post-translational modification N6-(pyridoxal phosphate)lysine.

This sequence belongs to the class-III pyridoxal-phosphate-dependent aminotransferase family. HemL subfamily. As to quaternary structure, homodimer. Requires pyridoxal 5'-phosphate as cofactor.

It localises to the cytoplasm. It catalyses the reaction (S)-4-amino-5-oxopentanoate = 5-aminolevulinate. It participates in porphyrin-containing compound metabolism; protoporphyrin-IX biosynthesis; 5-aminolevulinate from L-glutamyl-tRNA(Glu): step 2/2. The sequence is that of Glutamate-1-semialdehyde 2,1-aminomutase from Sodalis glossinidius (strain morsitans).